The primary structure comprises 411 residues: Na(+)-translocating NADH-quinone reductase subunit F (411 aa).

A helical transmembrane segment spans residues 5–25 (VILALGIAAFTVIVLVLVAII). Residues 36-130 (GDITIDINDD…NMEVELPEEI (95 aa)) enclose the 2Fe-2S ferredoxin-type domain. Cys73, Cys79, Cys82, and Cys114 together coordinate [2Fe-2S] cluster. Positions 133–273 (VKKWECTVIS…SGPFGEFFAK (141 aa)) constitute an FAD-binding FR-type domain. The interval 276–393 (DAEMVFIGGG…PVMNAAVIKM (118 aa)) is catalytic.

It belongs to the NqrF family. Composed of six subunits; NqrA, NqrB, NqrC, NqrD, NqrE and NqrF. The cofactor is [2Fe-2S] cluster. FAD is required as a cofactor.

It is found in the cell inner membrane. The catalysed reaction is a ubiquinone + n Na(+)(in) + NADH + H(+) = a ubiquinol + n Na(+)(out) + NAD(+). Functionally, NQR complex catalyzes the reduction of ubiquinone-1 to ubiquinol by two successive reactions, coupled with the transport of Na(+) ions from the cytoplasm to the periplasm. The first step is catalyzed by NqrF, which accepts electrons from NADH and reduces ubiquinone-1 to ubisemiquinone by a one-electron transfer pathway. The protein is Na(+)-translocating NADH-quinone reductase subunit F of Haemophilus influenzae (strain ATCC 51907 / DSM 11121 / KW20 / Rd).